The following is a 356-amino-acid chain: Protein MGF 360-10L (356 aa).

One copy of the ANK repeat lies at 57–89 (DLNTALMLATKENNYQLIKMFTDWGADINYGLI). Asn172 carries an N-linked (GlcNAc...) asparagine; by host glycan. A helical membrane pass occupies residues 249–271 (NFLTIYYCFILGANINLAMIASI). 2 N-linked (GlcNAc...) asparagine; by host glycosylation sites follow: Asn352 and Asn353.

Belongs to the asfivirus MGF 360 family.

The protein resides in the host membrane. In terms of biological role, plays a role in virus cell tropism, and may be required for efficient virus replication in macrophages. This African swine fever virus (isolate Tick/South Africa/Pretoriuskop Pr4/1996) (ASFV) protein is Protein MGF 360-10L.